Consider the following 202-residue polypeptide: MLLWFLSGSLLLFGTFDVWYFLRGLWVALRCCFQSPIRDVLAEQVVHGRVLLHDMDFMCHMNNARYLRECDFARFAHGTRIGLFMAARALKATMVVGATTIRYRRSLALGEGFELRTRIVSWDEKSFYLEQRFVSKSDGFISAVMLCRQNVIRGSPQNILEFLCKRKVDCPDISEDLQHWIRFISASSQALRAESGLDDKTK.

The first 24 residues, 1–24 (MLLWFLSGSLLLFGTFDVWYFLRG), serve as a signal peptide directing secretion.

It belongs to the THEM6 family.

The protein localises to the secreted. This is Protein THEM6 (them6) from Danio rerio (Zebrafish).